The chain runs to 191 residues: Transcriptional activator GvpE1 (191 aa).

The tract at residues 31–51 (SDGASDHADQPPDEGATQRYT) is disordered. 140-145 (KRKVYR) serves as a coordination point for DNA. A leucine-zipper region spans residues 150–181 (EGAFTRIDHMVDQLLLFSLVLKAVMTDCKARQ).

Interacts with GvpD.

It is found in the cytoplasm. Its activity is regulated as follows. The amount of protein that accumulates is controlled by GvpD; GvpD causes a reduction in the amount of GvpE, preventing accumulation of excessive amounts of gas vesicles. Functionally, plays a regulatory role in gas vesicle synthesis, activates transcription of the gvpA operon, and probably of the gvpD operon. Gas vesicles are hollow, gas filled proteinaceous nanostructures found in several microbial planktonic microorganisms. They allow positioning of halobacteria at the optimal depth for growth in the poorly aerated, shallow brine pools of their habitat. Expression of a 9.5 kb p-vac DNA fragment containing 2 divergently transcribed regions (gvpD-gvpE-gvpF-gvpG-gvpH-gvpI-gvpJ-gvpK-gvpL-gvpM and gvpA-gvpC-gvpN-gvpO) allows H.volcanii to produce gas vesicles. A similar region restores gas vesicle production in H.halobium without the p-vac locus, but it still has the c-vac locus. The chain is Transcriptional activator GvpE1 (gvpE11) from Halobacterium salinarum (strain ATCC 700922 / JCM 11081 / NRC-1) (Halobacterium halobium).